Consider the following 426-residue polypeptide: Serine hydroxymethyltransferase (426 aa).

Residues leucine 115 and 119–121 (GHI) each bind (6S)-5,6,7,8-tetrahydrofolate. Lysine 225 is subject to N6-(pyridoxal phosphate)lysine.

This sequence belongs to the SHMT family. In terms of assembly, homodimer. Pyridoxal 5'-phosphate serves as cofactor.

The protein resides in the cytoplasm. It functions in the pathway amino-acid biosynthesis; glycine biosynthesis; glycine from L-serine: step 1/1. Catalyzes the reversible interconversion of serine and glycine with a modified folate serving as the one-carbon carrier. Also exhibits a pteridine-independent aldolase activity toward beta-hydroxyamino acids, producing glycine and aldehydes, via a retro-aldol mechanism. The sequence is that of Serine hydroxymethyltransferase from Thermoplasma acidophilum (strain ATCC 25905 / DSM 1728 / JCM 9062 / NBRC 15155 / AMRC-C165).